Consider the following 160-residue polypeptide: Ribosomal RNA large subunit methyltransferase H (160 aa).

Residues L77, G109, and 128-133 (FSRLTF) each bind S-adenosyl-L-methionine.

Belongs to the RNA methyltransferase RlmH family. In terms of assembly, homodimer.

It is found in the cytoplasm. It catalyses the reaction pseudouridine(1915) in 23S rRNA + S-adenosyl-L-methionine = N(3)-methylpseudouridine(1915) in 23S rRNA + S-adenosyl-L-homocysteine + H(+). Its function is as follows. Specifically methylates the pseudouridine at position 1915 (m3Psi1915) in 23S rRNA. The sequence is that of Ribosomal RNA large subunit methyltransferase H from Desulfitobacterium hafniense (strain DSM 10664 / DCB-2).